A 268-amino-acid chain; its full sequence is Ribosomal RNA small subunit methyltransferase A (268 aa).

N17, L19, G44, E65, D89, and N110 together coordinate S-adenosyl-L-methionine.

Belongs to the class I-like SAM-binding methyltransferase superfamily. rRNA adenine N(6)-methyltransferase family. RsmA subfamily.

The protein resides in the cytoplasm. The enzyme catalyses adenosine(1518)/adenosine(1519) in 16S rRNA + 4 S-adenosyl-L-methionine = N(6)-dimethyladenosine(1518)/N(6)-dimethyladenosine(1519) in 16S rRNA + 4 S-adenosyl-L-homocysteine + 4 H(+). Its function is as follows. Specifically dimethylates two adjacent adenosines (A1518 and A1519) in the loop of a conserved hairpin near the 3'-end of 16S rRNA in the 30S particle. May play a critical role in biogenesis of 30S subunits. This Acidithiobacillus ferrooxidans (strain ATCC 53993 / BNL-5-31) (Leptospirillum ferrooxidans (ATCC 53993)) protein is Ribosomal RNA small subunit methyltransferase A.